The primary structure comprises 394 residues: Na(+)/H(+) antiporter NhaA (394 aa).

The next 11 membrane-spanning stretches (helical) occupy residues 14–34, 59–79, 95–115, 125–145, 154–174, 179–199, 213–233, 254–274, 292–312, 328–348, and 363–383; these read AGGLILIIAAAIALLMANSAL, LLLWINDGLMAVFFLVVGLEV, VFPAIAALGGMLAPALIYLLF, GWAIPAATDIAFALGVMALLG, VFLLALAIIDDLGVIIIIALF, VSLQSLGIAAAAIALLAYMNW, LVLWVCILKSGVHATLAGVIV, GLHPWVAYLILPLFAFANAGV, IATGLFIGKPLGIFTFSWLAV, IFAVSVLCGIGFTMSIFIASL, and LGILLGSTTAAVVGYSLLRLV.

It belongs to the NhaA Na(+)/H(+) (TC 2.A.33) antiporter family.

Its subcellular location is the cell inner membrane. It carries out the reaction Na(+)(in) + 2 H(+)(out) = Na(+)(out) + 2 H(+)(in). Functionally, na(+)/H(+) antiporter that extrudes sodium in exchange for external protons. This Yersinia pseudotuberculosis serotype O:1b (strain IP 31758) protein is Na(+)/H(+) antiporter NhaA.